We begin with the raw amino-acid sequence, 461 residues long: Phosphomethylpyrimidine synthase (461 aa).

Substrate is bound by residues Asn-80, Met-109, Tyr-138, His-173, Ser-193 to Gly-195, Asp-234 to Arg-237, and Glu-273. Residue His-277 participates in Zn(2+) binding. Tyr-300 contacts substrate. His-341 provides a ligand contact to Zn(2+). [4Fe-4S] cluster contacts are provided by Cys-421, Cys-424, and Cys-429.

The protein belongs to the ThiC family. The cofactor is [4Fe-4S] cluster.

The enzyme catalyses 5-amino-1-(5-phospho-beta-D-ribosyl)imidazole + S-adenosyl-L-methionine = 4-amino-2-methyl-5-(phosphooxymethyl)pyrimidine + CO + 5'-deoxyadenosine + formate + L-methionine + 3 H(+). Its pathway is cofactor biosynthesis; thiamine diphosphate biosynthesis. Functionally, catalyzes the synthesis of the hydroxymethylpyrimidine phosphate (HMP-P) moiety of thiamine from aminoimidazole ribotide (AIR) in a radical S-adenosyl-L-methionine (SAM)-dependent reaction. The protein is Phosphomethylpyrimidine synthase of Solibacter usitatus (strain Ellin6076).